A 591-amino-acid chain; its full sequence is Ferric-chelate reductase 1 (591 aa).

Residues 6–26 (FTVSAFILLLHVSFVANYPSG) traverse the membrane as a helical segment. One can recognise a Reelin domain in the interval 13-179 (LLLHVSFVAN…FTTPEATIAP (167 aa)). 5 N-linked (GlcNAc...) asparagine glycosylation sites follow: N50, N85, N308, N321, and N353. One can recognise a DOMON domain in the interval 216–331 (ERACVLLSFT…ASYYIFVADG (116 aa)). In terms of domain architecture, Cytochrome b561 spans 335–533 (DGRIHKHSQQ…VGTEIILEIH (199 aa)). Residues 372–392 (VHGALMFVAWMTTVSVGVLIA) traverse the membrane as a helical segment. Heme b contacts are provided by H373 and H413. Helical transmembrane passes span 416–436 (LMLTTSALTFIAFLLPFIYRG) and 445–465 (HPYLGFIVMVLAVLQLLLAAF). The heme b site is built by H445 and H481. A run of 3 helical transmembrane segments spans residues 490 to 510 (IIAVAAMFLGMDLPGLNLPGP), 514 to 534 (YAMIGFVAWHVGTEIILEIHA), and 568 to 588 (VVLAIYVCGNLTFLTMFLSAI).

It belongs to the FRRS1 family. It depends on heme b as a cofactor.

The protein localises to the membrane. Ferric-chelate reductases reduce Fe(3+) to Fe(2+) before its transport from the endosome to the cytoplasm. The polypeptide is Ferric-chelate reductase 1 (FRRS1) (Bos taurus (Bovine)).